Reading from the N-terminus, the 788-residue chain is MSSARTPLPTLNERDTEQPTLGHLDSKPSSKSNMIRGRNSATSADEQPHIGNYRLLKTIGKGNFAKVKLARHILTGKEVAVKIIDKTQLNSSSLQKLFREVRIMKVLNHPNIVKLFEVIETEKTLYLVMEYASGGEVFDYLVAHGRMKEKEARAKFRQIVSAVQYCHQKFIVHRDLKAENLLLDADMNIKIADFGFSNEFTFGNKLDTFCGSPPYAAPELFQGKKYDGPEVDVWSLGVILYTLVSGSLPFDGQNLKELRERVLRGKYRIPFYMSTDCENLLKKFLILNPSKRGTLEQIMKDRWMNVGHEDDELKPYVEPLPDYKDPRRTELMVSMGYTREEIQDSLVGQRYNEVMATYLLLGYKSSELEGDTITLKPRPSADLTNSSAPSPSHKVQRSVSANPKQRRFSDQAAGPAIPTSNSYSKKTQSNNAENKRPEEDRESGRKASSTAKVPASPLPGLERKKTTPTPSTNSVLSTSTNRSRNSPLLERASLGQASIQNGKDSLTMPGSRASTASASAAVSAARPRQHQKSMSASVHPNKASGLPPTESNCEVPRPSTAPQRVPVASPSAHNISSSGGAPDRTNFPRGVSSRSTFHAGQLRQVRDQQNLPYGVTPASPSGHSQGRRGASGSIFSKFTSKFVRRNLSFRFARRNLNEPESKDRVETLRPHVVGSGGNDKEKEEFREAKPRSLRFTWSMKTTSSMEPNEMMREIRKVLDANSCQSELHEKYMLLCMHGTPGHEDFVQWEMEVCKLPRLSLNGVRFKRISGTSMAFKNIASKIANELKL.

The tract at residues 1-46 (MSSARTPLPTLNERDTEQPTLGHLDSKPSSKSNMIRGRNSATSADE) is disordered. The span at 27–45 (KPSSKSNMIRGRNSATSAD) shows a compositional bias: polar residues. Ser40 bears the Phosphoserine mark. The region spanning 53–304 (YRLLKTIGKG…LEQIMKDRWM (252 aa)) is the Protein kinase domain. Thr58 is subject to Phosphothreonine; by autocatalysis. ATP-binding positions include 59 to 67 (IGKGNFAKV) and Lys82. Ser91, Ser92, and Ser93 each carry phosphoserine; by CaMK1. The Proton acceptor role is filled by Asp175. The residue at position 208 (Thr208) is a Phosphothreonine; by LKB1 and TAOK1. Ser212 carries the post-translational modification Phosphoserine; by GSK3-beta. Position 274 is a phosphoserine; by autocatalysis (Ser274). At Thr275 the chain carries Phosphothreonine; by autocatalysis. Thr294 bears the Phosphothreonine; by CaMK1 mark. Positions 323–362 (YKDPRRTELMVSMGYTREEIQDSLVGQRYNEVMATYLLLG) constitute a UBA domain. The interval 373 to 632 (ITLKPRPSAD…HSQGRRGASG (260 aa)) is disordered. 2 positions are modified to phosphoserine: Lys376 and Ser409. Residues 418-432 (PTSNSYSKKTQSNNA) show a composition bias toward polar residues. Positions 433–445 (ENKRPEEDRESGR) are enriched in basic and acidic residues. Phosphoserine is present on Ser456. A Phosphothreonine modification is found at Thr467. A compositionally biased stretch (polar residues) spans 467-486 (TPTPSTNSVLSTSTNRSRNS). Phosphoserine is present on residues Ser486 and Ser493. Over residues 495–504 (GQASIQNGKD) the composition is skewed to polar residues. The span at 511-525 (SRASTASASAAVSAA) shows a compositional bias: low complexity. Phosphoserine occurs at positions 569, 571, and 592. The residue at position 596 (Thr596) is a Phosphothreonine; by PKC/PRKCZ. 2 positions are modified to phosphoserine: Ser619 and Ser722. The region spanning 739-788 (TPGHEDFVQWEMEVCKLPRLSLNGVRFKRISGTSMAFKNIASKIANELKL) is the KA1 domain.

It belongs to the protein kinase superfamily. CAMK Ser/Thr protein kinase family. SNF1 subfamily. As to quaternary structure, homodimer. Interacts with PAK5; leading to inhibit the protein kinase activity. Interacts with MAPT/TAU. Interacts with MTCL1 isoform 1; the interaction is direct and increases MARK2 microtubule-binding ability. Interacts (when phosphorylated at Thr-596) with YWHAZ. Interacts with YWHAB, YWHAG and YWHAQ. (Microbial infection) In case of infection, interacts with H.pylori CagA, leading to inhibit kinase activity and junctional and polarity defects. Mg(2+) serves as cofactor. In terms of processing, autophosphorylated. Phosphorylated at Thr-208 by STK11/LKB1 in complex with STE20-related adapter-alpha (STRADA) pseudo kinase and CAB39. Phosphorylation at Thr-208 by TAOK1 activates the kinase activity, leading to phosphorylation and detachment of MAPT/TAU from microtubules. Phosphorylation at Ser-212 by GSK3-beta (GSK3B) inhibits the kinase activity. Phosphorylation by CaMK1 promotes activity and is required to promote neurite outgrowth. Phosphorylation at Thr-596 by PRKCZ/aPKC in polarized epithelial cells inhibits the kinase activity and promotes binding to 14-3-3 protein YWHAZ, leading to relocation from cell membrane to cytoplasm. High levels of expression in heart, brain, skeletal muscle and pancreas, lower levels observed in lung, liver and kidney.

It localises to the cell membrane. The protein resides in the cytoplasm. The protein localises to the lateral cell membrane. Its subcellular location is the cytoskeleton. It is found in the cell projection. It localises to the dendrite. The enzyme catalyses L-seryl-[protein] + ATP = O-phospho-L-seryl-[protein] + ADP + H(+). It carries out the reaction L-threonyl-[protein] + ATP = O-phospho-L-threonyl-[protein] + ADP + H(+). The catalysed reaction is L-seryl-[tau protein] + ATP = O-phospho-L-seryl-[tau protein] + ADP + H(+). It catalyses the reaction L-threonyl-[tau protein] + ATP = O-phospho-L-threonyl-[tau protein] + ADP + H(+). With respect to regulation, inhibited by PAK5; inhibition is independent of the kinase activity of PAK5. Activated by phosphorylation on Thr-208. Inhibited by phosphorylation at Ser-212 and Thr-596. Inhibited by hymenialdisine. Specifically inhibited by the H.pylori CagA peptide FPLKRHDKVDDLSK that mimics host substrates and binds to the kinase substrate-binding site. Its function is as follows. Serine/threonine-protein kinase. Involved in cell polarity and microtubule dynamics regulation. Phosphorylates CRTC2/TORC2, DCX, HDAC7, KIF13B, MAP2, MAP4 and RAB11FIP2. Phosphorylates the microtubule-associated protein MAPT/TAU. Plays a key role in cell polarity by phosphorylating the microtubule-associated proteins MAP2, MAP4 and MAPT/TAU at KXGS motifs, causing detachment from microtubules, and their disassembly. Regulates epithelial cell polarity by phosphorylating RAB11FIP2. Involved in the regulation of neuronal migration through its dual activities in regulating cellular polarity and microtubule dynamics, possibly by phosphorylating and regulating DCX. Regulates axogenesis by phosphorylating KIF13B, promoting interaction between KIF13B and 14-3-3 and inhibiting microtubule-dependent accumulation of KIF13B. Also required for neurite outgrowth and establishment of neuronal polarity. Regulates localization and activity of some histone deacetylases by mediating phosphorylation of HDAC7, promoting subsequent interaction between HDAC7 and 14-3-3 and export from the nucleus. Also acts as a positive regulator of the Wnt signaling pathway, probably by mediating phosphorylation of dishevelled proteins (DVL1, DVL2 and/or DVL3). Modulates the developmental decision to build a columnar versus a hepatic epithelial cell apparently by promoting a switch from a direct to a transcytotic mode of apical protein delivery. Essential for the asymmetric development of membrane domains of polarized epithelial cells. The protein is Serine/threonine-protein kinase MARK2 of Homo sapiens (Human).